A 387-amino-acid polypeptide reads, in one-letter code: tRNA pseudouridine synthase B (387 aa).

Residue Asp-43 is the Nucleophile of the active site.

The protein belongs to the pseudouridine synthase TruB family. Type 1 subfamily.

It catalyses the reaction uridine(55) in tRNA = pseudouridine(55) in tRNA. Responsible for synthesis of pseudouridine from uracil-55 in the psi GC loop of transfer RNAs. The protein is tRNA pseudouridine synthase B of Bifidobacterium longum subsp. infantis (strain ATCC 15697 / DSM 20088 / JCM 1222 / NCTC 11817 / S12).